Reading from the N-terminus, the 572-residue chain is Chromatin assembly factor 1 subunit B (572 aa).

7 WD repeats span residues 11-54, 64-103, 127-166, 169-208, 228-279, 301-347, and 351-392; these read HNKE…DGKA, RHTKAVNVVRFSPTGEILASGGDDAVILLWKMNDSKEPEQ, GHLEDVYDICWATDGNLMTSASVDNTVIIWDVSKGQKISI, EHKSYVQGVTWDPLGQYIATLSCDRVLRIYNTQKKRVAFN, FHDD…RPIA, RPVA…PFGY, and IHYH…IPLK. T401 carries the phosphothreonine modification. The interval 403–572 is disordered; that stretch reads DTAKKAKNQT…LAPDDSSKTV (170 aa). Polar residues predominate over residues 411–430; sequence QTHQGSSPGSRSVEGTPSNR. S416 carries the post-translational modification Phosphoserine. The residue at position 426 (T426) is a Phosphothreonine. Positions 431 to 452 are enriched in low complexity; sequence TQDPSSPCTTPSPTTQSPAPSA. The residue at position 436 (S436) is a Phosphoserine. T440 carries the post-translational modification Phosphothreonine. Phosphoserine is present on residues S456 and S465. Position 501 is an N6-acetyllysine (K501). A phosphothreonine mark is found at T502 and T510. Positions 511-529 are enriched in polar residues; sequence PLKTDTVPNPQPNSGTAPS. Residues 546–559 are compositionally biased toward basic and acidic residues; sequence PELKRPRLEEREGD.

It belongs to the WD repeat HIR1 family. In terms of assembly, subunit of the CAF-1 complex that contains RBBP4, CHAF1B and CHAF1A. CHAF1A binds directly to CHAF1B. Interacts with histones H3.1, H3.2 and H3.1t.

It is found in the nucleus. Its subcellular location is the cytoplasm. Acts as a component of the histone chaperone complex chromatin assembly factor 1 (CAF-1), which assembles histone octamers onto DNA during replication and repair. CAF-1 performs the first step of the nucleosome assembly process, bringing newly synthesized histones H3 and H4 to replicating DNA; histones H2A/H2B can bind to this chromatin precursor subsequent to DNA replication to complete the histone octamer. In Mus musculus (Mouse), this protein is Chromatin assembly factor 1 subunit B.